A 61-amino-acid polypeptide reads, in one-letter code: UPF0434 protein PSPPH_1629 (61 aa).

It belongs to the UPF0434 family.

The sequence is that of UPF0434 protein PSPPH_1629 from Pseudomonas savastanoi pv. phaseolicola (strain 1448A / Race 6) (Pseudomonas syringae pv. phaseolicola (strain 1448A / Race 6)).